The sequence spans 108 residues: Transcriptional activator HlyU (108 aa).

Positions 13-107 constitute an HTH arsR-type domain; it reads EMEKNSAKAV…LLHRLYCQAN (95 aa). A DNA-binding region (H-T-H motif) is located at residues 47–66; it reads VGELSSRLELSQSALSQHLA.

Functionally, up-regulates the expression of the hemolysin gene, hlyA, and may promote expression of other virulence determinants in vivo. It may have both positive and negative regulator activities. The protein is Transcriptional activator HlyU (hlyU) of Vibrio cholerae serotype O1 (strain ATCC 39315 / El Tor Inaba N16961).